The following is a 191-amino-acid chain: Orotate phosphoribosyltransferase (191 aa).

114 to 122 (EDVVTTGKS) lines the 5-phospho-alpha-D-ribose 1-diphosphate pocket. Orotate-binding residues include T118 and R146.

Belongs to the purine/pyrimidine phosphoribosyltransferase family. PyrE subfamily. In terms of assembly, homodimer. Mg(2+) serves as cofactor.

The enzyme catalyses orotidine 5'-phosphate + diphosphate = orotate + 5-phospho-alpha-D-ribose 1-diphosphate. It functions in the pathway pyrimidine metabolism; UMP biosynthesis via de novo pathway; UMP from orotate: step 1/2. Functionally, catalyzes the transfer of a ribosyl phosphate group from 5-phosphoribose 1-diphosphate to orotate, leading to the formation of orotidine monophosphate (OMP). The polypeptide is Orotate phosphoribosyltransferase (Clostridium botulinum (strain ATCC 19397 / Type A)).